Consider the following 140-residue polypeptide: Protein BIC1 (140 aa).

Over residues 1–10 (MMNIDDTTSP) the composition is skewed to polar residues. Residues 1–71 (MMNIDDTTSP…RVDTGRERLK (71 aa)) form a disordered region. Residues 42–68 (ADKKDLALLEEKPKQSQEEDRVDTGRE) are compositionally biased toward basic and acidic residues.

Interacts with CRY2 in both darkness and light.

It localises to the nucleus. Regulates the blue-light dependent dimerization of CRY2 and formation of photobodies. Interacts with photoexited CRY2 to inhibit its activity. Inhibits CRY phosphorylation. The sequence is that of Protein BIC1 from Arabidopsis thaliana (Mouse-ear cress).